The chain runs to 313 residues: L-lactate dehydrogenase 1 (313 aa).

NAD(+)-binding residues include Val15, Asp36, Arg41, and Tyr66. Substrate contacts are provided by residues Gln83, Arg89, and 121–124 (NPVD). NAD(+) contacts are provided by residues 119-121 (ASN) and Ser144. 149–152 (DTAR) is a binding site for substrate. Residues Arg154 and His169 each coordinate beta-D-fructose 1,6-bisphosphate. Catalysis depends on His176, which acts as the Proton acceptor. The residue at position 218 (Tyr218) is a Phosphotyrosine. Thr227 serves as a coordination point for substrate.

It belongs to the LDH/MDH superfamily. LDH family. Homotetramer.

It is found in the cytoplasm. It carries out the reaction (S)-lactate + NAD(+) = pyruvate + NADH + H(+). The protein operates within fermentation; pyruvate fermentation to lactate; (S)-lactate from pyruvate: step 1/1. Allosterically activated by fructose 1,6-bisphosphate (FBP). Its function is as follows. Catalyzes the conversion of lactate to pyruvate. In Listeria monocytogenes serotype 4b (strain F2365), this protein is L-lactate dehydrogenase 1.